Consider the following 345-residue polypeptide: Cytoskeleton protein RodZ (345 aa).

The Cytoplasmic segment spans residues 1–111; that stretch reads MNTEASQDQT…LGKKHKKRDG (111 aa). The 61-residue stretch at 19–79 folds into the HTH cro/C1-type domain; it reads LRQARESLGL…KLVHLPEDEL (61 aa). A DNA-binding region (H-T-H motif) is located at residues 30 to 49; that stretch reads QQTVAERLCLKVSTIRDIEE. A helical; Signal-anchor for type II membrane protein membrane pass occupies residues 112-132; sequence WLMSFTWLIVLVVLGLTGAWW. The Periplasmic portion of the chain corresponds to 133 to 345; the sequence is WQNHQAQQAE…RVARLTVGVE (213 aa). Positions 151–260 are disordered; sequence SAQLSQNGGQ…LPTADAGVSG (110 aa). Over residues 188 to 225 the composition is skewed to polar residues; sequence PLTNHSGSAITNSATTSSVPKTTSTEPVDTANTNTTMH. Over residues 229–241 the composition is skewed to low complexity; sequence AASAAVSPSQVPQ.

Belongs to the RodZ family.

It localises to the cell inner membrane. Its function is as follows. Cytoskeletal protein that is involved in cell-shape control through regulation of the length of the long axis. This is Cytoskeleton protein RodZ from Yersinia pestis (strain Pestoides F).